An 83-amino-acid chain; its full sequence is Small ribosomal subunit protein bS20 (83 aa).

Residues 1 to 25 (MPNIKSAIKRVNTTHTAEERNISQK) form a disordered region. Over residues 16 to 25 (TAEERNISQK) the composition is skewed to basic and acidic residues.

The protein belongs to the bacterial ribosomal protein bS20 family.

Its function is as follows. Binds directly to 16S ribosomal RNA. In Staphylococcus saprophyticus subsp. saprophyticus (strain ATCC 15305 / DSM 20229 / NCIMB 8711 / NCTC 7292 / S-41), this protein is Small ribosomal subunit protein bS20.